The chain runs to 410 residues: Multifunctional CCA protein (410 aa).

The ATP site is built by glycine 8 and arginine 11. CTP contacts are provided by glycine 8 and arginine 11. Mg(2+) contacts are provided by glutamate 21 and aspartate 23. Residues arginine 91, arginine 137, and arginine 140 each coordinate ATP. Residues arginine 91, arginine 137, and arginine 140 each coordinate CTP. An HD domain is found at 228 to 329 (TGVHVLSVLR…LELLQRFDVF (102 aa)).

The protein belongs to the tRNA nucleotidyltransferase/poly(A) polymerase family. Bacterial CCA-adding enzyme type 1 subfamily. As to quaternary structure, monomer. Can also form homodimers and oligomers. Requires Mg(2+) as cofactor. Ni(2+) serves as cofactor.

The catalysed reaction is a tRNA precursor + 2 CTP + ATP = a tRNA with a 3' CCA end + 3 diphosphate. It catalyses the reaction a tRNA with a 3' CCA end + 2 CTP + ATP = a tRNA with a 3' CCACCA end + 3 diphosphate. Catalyzes the addition and repair of the essential 3'-terminal CCA sequence in tRNAs without using a nucleic acid template. Adds these three nucleotides in the order of C, C, and A to the tRNA nucleotide-73, using CTP and ATP as substrates and producing inorganic pyrophosphate. tRNA 3'-terminal CCA addition is required both for tRNA processing and repair. Also involved in tRNA surveillance by mediating tandem CCA addition to generate a CCACCA at the 3' terminus of unstable tRNAs. While stable tRNAs receive only 3'-terminal CCA, unstable tRNAs are marked with CCACCA and rapidly degraded. In Ectopseudomonas mendocina (strain ymp) (Pseudomonas mendocina), this protein is Multifunctional CCA protein.